A 111-amino-acid polypeptide reads, in one-letter code: Cytochrome c (111 aa).

Residue A1 is modified to N-acetylalanine. Residues C22, C25, and H26 each contribute to the heme c site. Residue K80 is modified to N6,N6,N6-trimethyllysine. M88 is a heme c binding site. The residue at position 94 (K94) is an N6,N6,N6-trimethyllysine.

It belongs to the cytochrome c family. Binds 1 heme c group covalently per subunit.

It localises to the mitochondrion intermembrane space. In terms of biological role, electron carrier protein. The oxidized form of the cytochrome c heme group can accept an electron from the heme group of the cytochrome c1 subunit of cytochrome reductase. Cytochrome c then transfers this electron to the cytochrome oxidase complex, the final protein carrier in the mitochondrial electron-transport chain. The protein is Cytochrome c of Nigella damascena (Love-in-a-mist).